The chain runs to 137 residues: ATP synthase epsilon chain (137 aa).

It belongs to the ATPase epsilon chain family. In terms of assembly, F-type ATPases have 2 components, CF(1) - the catalytic core - and CF(0) - the membrane proton channel. CF(1) has five subunits: alpha(3), beta(3), gamma(1), delta(1), epsilon(1). CF(0) has three main subunits: a, b and c.

It localises to the cellular thylakoid membrane. Produces ATP from ADP in the presence of a proton gradient across the membrane. The sequence is that of ATP synthase epsilon chain (atpC) from Synechococcus elongatus (strain ATCC 33912 / PCC 7942 / FACHB-805) (Anacystis nidulans R2).